The chain runs to 157 residues: Ribosomal RNA large subunit methyltransferase H (157 aa).

S-adenosyl-L-methionine contacts are provided by residues leucine 73, glycine 104, and 123 to 128; that span reads LGPLTL.

This sequence belongs to the RNA methyltransferase RlmH family. In terms of assembly, homodimer.

The protein resides in the cytoplasm. The enzyme catalyses pseudouridine(1915) in 23S rRNA + S-adenosyl-L-methionine = N(3)-methylpseudouridine(1915) in 23S rRNA + S-adenosyl-L-homocysteine + H(+). Functionally, specifically methylates the pseudouridine at position 1915 (m3Psi1915) in 23S rRNA. The polypeptide is Ribosomal RNA large subunit methyltransferase H (Xylella fastidiosa (strain M12)).